Consider the following 431-residue polypeptide: MNFDVVIIGAGIAGLTCGLTLQEKGVRCAIINNGQAALDFSSGSMDLLSRLPNGSTVDSFAQSYAALAQQSPNHPYVILGKDVVLDKIQQFETLAKSLNLSLVGSSDKNHKRVTALGGLRGTWLSPNSVPTVSLEGKFPHDNIVLLGIEGYHDFQPQLLADNLKQNPQFAHCEITTNFLHIPELDHLRQNSREFRSVNIAQVLEYKLSFNNLVDEIKQAVGNAKAAFLPACFGLDDQSFFESLKQATGIELYELPTLPPSLLGIRQHRQLRHRFEKLGGVMFNGDRALRSEFEGNKVARIFTQLHLENAVTAKYFVLASGGFFSNGLVSEFEEIYEPLFRSDIVKTERFNATDRFSWISKRFADPQPYQSAGVVINAECQVQKDGNNVENLFAIGAVIGGYNGIELGCGSGVAVTTALKVADNIIAKESSN.

It belongs to the anaerobic G-3-P dehydrogenase subunit B family. In terms of assembly, composed of a catalytic GlpA/B dimer and of membrane bound GlpC. It depends on FMN as a cofactor.

It carries out the reaction a quinone + sn-glycerol 3-phosphate = dihydroxyacetone phosphate + a quinol. It participates in polyol metabolism; glycerol degradation via glycerol kinase pathway; glycerone phosphate from sn-glycerol 3-phosphate (anaerobic route): step 1/1. Its function is as follows. Conversion of glycerol 3-phosphate to dihydroxyacetone. Uses fumarate or nitrate as electron acceptor. The sequence is that of Anaerobic glycerol-3-phosphate dehydrogenase subunit B from Mannheimia succiniciproducens (strain KCTC 0769BP / MBEL55E).